A 233-amino-acid chain; its full sequence is Antiholin-like protein LrgB (233 aa).

7 helical membrane-spanning segments follow: residues 7–27 (INTP…ATFL), 33–53 (GFFL…FLKL), 63–83 (IGGD…AIPL), 97–117 (ILGG…LIAE), 124–144 (GIIA…PVSA), 152–172 (LTSL…SKLI), and 212–232 (ISLV…ATLL).

The protein belongs to the CidB/LrgB family. LrgB subfamily.

The protein resides in the cell membrane. Inhibits the expression or activity of extracellular murein hydrolases by interacting, possibly with LrgA, with the holin-like proteins CidA and/or CidB. The LrgAB and CidAB proteins may affect the proton motive force of the membrane. May be involved in programmed cell death (PCD), possibly triggering PCD in response to antibiotics and environmental stresses. This is Antiholin-like protein LrgB from Staphylococcus saprophyticus subsp. saprophyticus (strain ATCC 15305 / DSM 20229 / NCIMB 8711 / NCTC 7292 / S-41).